The sequence spans 310 residues: Putative olfactory receptor 7A2 (310 aa).

Topologically, residues 1–26 (MVKAGNETQISEFLLLGFSEKQELQP) are extracellular. N-linked (GlcNAc...) asparagine glycosylation occurs at asparagine 6. The helical transmembrane segment at 27-47 (FLFGLFLSMYLVTVLGNLLII) threads the bilayer. The Cytoplasmic portion of the chain corresponds to 48–55 (LAAISDSC). A helical transmembrane segment spans residues 56 to 76 (LHTPMYFFLSNLSFVDICFAS). At 77-100 (TMVPKMLVNIQTQSKVITYAGCIT) the chain is on the extracellular side. Residues cysteine 98 and cysteine 190 are joined by a disulfide bond. A helical membrane pass occupies residues 101-121 (QMCFFVLFIVLDSLLLTVMAY). Residues 122-140 (DQFVAICHPLHYTVIMSPQ) are Cytoplasmic-facing. The chain crosses the membrane as a helical span at residues 141–161 (LCGLLVLVSWIMSVLNSMLQS). The Extracellular segment spans residues 162–198 (LVTLQLSFCTDLEIPHFFCELNEMIHLACSDTFVNNM). The chain crosses the membrane as a helical span at residues 199–218 (VMHFAAVLLDGGPLVGILYS). Residues 219–238 (YCRIVSSIRAISSTQGKYKA) lie on the Cytoplasmic side of the membrane. A helical membrane pass occupies residues 239 to 259 (LSTCASHLSVVSIFYGTGLGV). Over 260–272 (YLSSTMTQNLHST) the chain is Extracellular. The chain crosses the membrane as a helical span at residues 273–293 (AVASVMYTVVTPMLNPFIYSL). The Cytoplasmic segment spans residues 294–310 (RNKDIKGALTQFFRGKQ).

Belongs to the G-protein coupled receptor 1 family.

The protein localises to the cell membrane. Functionally, odorant receptor. This chain is Putative olfactory receptor 7A2 (OR7A2P), found in Homo sapiens (Human).